Here is a 159-residue protein sequence, read N- to C-terminus: U-actitoxin-Avd13b (159 aa).

A signal peptide spans 1-18; that stretch reads MKSIFLVFFAVCLVKAEA. Positions 19–26 are excised as a propeptide; that stretch reads GKGRKREP. Intrachain disulfides connect Cys33–Cys45 and Cys36–Cys52. Residues 59 to 60 constitute a propeptide that is removed on maturation; sequence EP. Disulfide bonds link Cys67-Cys79 and Cys70-Cys86. A propeptide spanning residues 93–94 is cleaved from the precursor; the sequence is EP. Disulfide bonds link Cys101–Cys113 and Cys104–Cys120. Residues 127 to 128 constitute a propeptide that is removed on maturation; sequence EP. Disulfide bonds link Cys135–Cys147 and Cys138–Cys154.

This sequence belongs to the sea anemone BBH family.

It localises to the secreted. The protein resides in the nematocyst. In terms of biological role, inhibits ion channels. This chain is U-actitoxin-Avd13b, found in Anemonia viridis (Snakelocks anemone).